The sequence spans 70 residues: Protein SlyX homolog (70 aa).

Positions 51-70 (RMREAEANRPGPTNEPPPHY) are disordered.

The protein belongs to the SlyX family.

This Nitrobacter hamburgensis (strain DSM 10229 / NCIMB 13809 / X14) protein is Protein SlyX homolog.